Consider the following 85-residue polypeptide: Small ribosomal subunit protein bS16 (85 aa).

Belongs to the bacterial ribosomal protein bS16 family.

This is Small ribosomal subunit protein bS16 from Neorickettsia sennetsu (strain ATCC VR-367 / Miyayama) (Ehrlichia sennetsu).